The sequence spans 208 residues: Protein-L-isoaspartate O-methyltransferase (208 aa).

Serine 59 is an active-site residue.

It belongs to the methyltransferase superfamily. L-isoaspartyl/D-aspartyl protein methyltransferase family.

It localises to the cytoplasm. It carries out the reaction [protein]-L-isoaspartate + S-adenosyl-L-methionine = [protein]-L-isoaspartate alpha-methyl ester + S-adenosyl-L-homocysteine. Catalyzes the methyl esterification of L-isoaspartyl residues in peptides and proteins that result from spontaneous decomposition of normal L-aspartyl and L-asparaginyl residues. It plays a role in the repair and/or degradation of damaged proteins. The polypeptide is Protein-L-isoaspartate O-methyltransferase (Shigella sonnei (strain Ss046)).